Reading from the N-terminus, the 469-residue chain is Glutamate--tRNA ligase (469 aa).

Residues Pro-9–Gly-19 carry the 'HIGH' region motif. Zn(2+) contacts are provided by Cys-98, Cys-100, Cys-125, and Asp-127. Residues Lys-236–Arg-240 carry the 'KMSKS' region motif. Lys-239 serves as a coordination point for ATP.

Belongs to the class-I aminoacyl-tRNA synthetase family. Glutamate--tRNA ligase type 1 subfamily. In terms of assembly, monomer. Zn(2+) serves as cofactor.

Its subcellular location is the cytoplasm. The enzyme catalyses tRNA(Glu) + L-glutamate + ATP = L-glutamyl-tRNA(Glu) + AMP + diphosphate. Its function is as follows. Catalyzes the attachment of glutamate to tRNA(Glu) in a two-step reaction: glutamate is first activated by ATP to form Glu-AMP and then transferred to the acceptor end of tRNA(Glu). The sequence is that of Glutamate--tRNA ligase from Shewanella putrefaciens (strain CN-32 / ATCC BAA-453).